The chain runs to 305 residues: Nuclear egress protein 1 (305 aa).

Residues 1–42 (MYDIAPRRSGSRPGPGRDKTRRRSRFSAAGNPGVERRASRKS) are disordered. Residues 105–224 (CLTLSGMGYY…YVIFPGTSAH (120 aa)) form a CCCH-type zinc finger.

This sequence belongs to the herpesviridae NEC1 protein family. As to quaternary structure, forms a heterohexameric complex with NEC2. Interacts with capsid vertex specific component 2/CVC2; this interaction directs the capsid to the host inner nuclear membrane to initiate budding. Post-translationally, phosphorylated at serine residues in the N-terminus. This phosphorylation regulates the localization within the inner nuclear membrane.

Its subcellular location is the host nucleus inner membrane. Functionally, plays an essential role in virion nuclear egress, the first step of virion release from infected cell. Within the host nucleus, NEC1 interacts with the newly formed capsid through the vertexes and directs it to the inner nuclear membrane by associating with NEC2. Induces the budding of the capsid at the inner nuclear membrane as well as its envelopment into the perinuclear space. There, the NEC1/NEC2 complex promotes the fusion of the enveloped capsid with the outer nuclear membrane and the subsequent release of the viral capsid into the cytoplasm where it will reach the secondary budding sites in the host Golgi or trans-Golgi network. In Human herpesvirus 2 (strain HG52) (HHV-2), this protein is Nuclear egress protein 1.